Reading from the N-terminus, the 115-residue chain is MNMLMILSVNIILSTCLIMIAFWLPQLNVYTEKANPYECGFDPMSSARLPFSMKFFLVAITFLLFDLEIALLLPLPWAIQMHNINMMMSTAFILVSILALGLAYEWLQKGLEWTE.

3 helical membrane passes run L4–L24, F55–L75, and I84–Y104.

The protein belongs to the complex I subunit 3 family. In terms of assembly, core subunit of respiratory chain NADH dehydrogenase (Complex I) which is composed of 45 different subunits. Interacts with TMEM186. Interacts with TMEM242.

Its subcellular location is the mitochondrion inner membrane. The enzyme catalyses a ubiquinone + NADH + 5 H(+)(in) = a ubiquinol + NAD(+) + 4 H(+)(out). Core subunit of the mitochondrial membrane respiratory chain NADH dehydrogenase (Complex I) which catalyzes electron transfer from NADH through the respiratory chain, using ubiquinone as an electron acceptor. Essential for the catalytic activity of complex I. The chain is NADH-ubiquinone oxidoreductase chain 3 from Podomys floridanus (Florida mouse).